The primary structure comprises 287 residues: Large ribosomal subunit protein uL2 (287 aa).

Residues 221–287 (RGSVMNPCDH…SKRSRGGRDS (67 aa)) form a disordered region. Positions 258-287 (KTRKRNKPSNRFVLRKRRRVSKRSRGGRDS) are enriched in basic residues.

This sequence belongs to the universal ribosomal protein uL2 family. As to quaternary structure, part of the 50S ribosomal subunit. Forms a bridge to the 30S subunit in the 70S ribosome.

In terms of biological role, one of the primary rRNA binding proteins. Required for association of the 30S and 50S subunits to form the 70S ribosome, for tRNA binding and peptide bond formation. It has been suggested to have peptidyltransferase activity; this is somewhat controversial. Makes several contacts with the 16S rRNA in the 70S ribosome. The protein is Large ribosomal subunit protein uL2 of Prochlorococcus marinus (strain SARG / CCMP1375 / SS120).